Consider the following 940-residue polypeptide: Isoleucine--tRNA ligase (940 aa).

Residues 58–68 (PYANGNIHIGH) carry the 'HIGH' region motif. Glu-563 provides a ligand contact to L-isoleucyl-5'-AMP. Residues 604–608 (KMSKS) carry the 'KMSKS' region motif. Lys-607 provides a ligand contact to ATP. Residues Cys-903, Cys-906, Cys-923, and Cys-926 each contribute to the Zn(2+) site.

Belongs to the class-I aminoacyl-tRNA synthetase family. IleS type 1 subfamily. As to quaternary structure, monomer. The cofactor is Zn(2+).

The protein localises to the cytoplasm. The enzyme catalyses tRNA(Ile) + L-isoleucine + ATP = L-isoleucyl-tRNA(Ile) + AMP + diphosphate. Functionally, catalyzes the attachment of isoleucine to tRNA(Ile). As IleRS can inadvertently accommodate and process structurally similar amino acids such as valine, to avoid such errors it has two additional distinct tRNA(Ile)-dependent editing activities. One activity is designated as 'pretransfer' editing and involves the hydrolysis of activated Val-AMP. The other activity is designated 'posttransfer' editing and involves deacylation of mischarged Val-tRNA(Ile). This chain is Isoleucine--tRNA ligase, found in Buchnera aphidicola subsp. Acyrthosiphon pisum (strain 5A).